Consider the following 624-residue polypeptide: D-3-phosphoglycerate dehydrogenase 2, chloroplastic (624 aa).

A chloroplast-targeting transit peptide spans 1–49 (MAFSSSCSSVKAVNSRWTSPSPSPSSRFAVLPAFLHRRYATSVKLTAIS). Position 71 is a phosphoserine (Ser71). NAD(+) contacts are provided by residues 231–232 (KV), Asp251, 310–312 (VAR), and Asp336. Arg312 is a catalytic residue. Glu341 is an active-site residue. His360 acts as the Proton donor in catalysis. NAD(+) is bound at residue 360 to 363 (HLGA). One can recognise an ACT domain in the interval 552–624 (LILCRQVDQP…AIEEFVFLKL (73 aa)).

Belongs to the D-isomer specific 2-hydroxyacid dehydrogenase family. Ubiquitous, but highly expressed in roots and in dark-grown leaf tissues. Expressed in the vasculature, stigma, anther filaments and shoot apical meristem. Not detected in the root meristem or in embryo.

The protein resides in the plastid. It is found in the chloroplast. It catalyses the reaction (2R)-3-phosphoglycerate + NAD(+) = 3-phosphooxypyruvate + NADH + H(+). Its pathway is amino-acid biosynthesis; L-serine biosynthesis; L-serine from 3-phospho-D-glycerate: step 1/3. With respect to regulation, inhibited by 90 uM 3-phosphonooxypyruvate, but not by Ser, Thr, Val, Gly Trp, O-acetyl-L-Ser and Cys. In terms of biological role, involved in the plastidial phosphorylated pathway of serine biosynthesis (PPSB). This chain is D-3-phosphoglycerate dehydrogenase 2, chloroplastic (PGDH2), found in Arabidopsis thaliana (Mouse-ear cress).